Reading from the N-terminus, the 64-residue chain is Translation machinery-associated protein 7 homolog (64 aa).

Residues 1-64 (MSGRQGGKAK…GGGIKKSGKK (64 aa)) form a disordered region. A coiled-coil region spans residues 21–50 (DLSEEDVEFKKKQQEEAKKIKEMAAKAGQR). Positions 28-44 (EFKKKQQEEAKKIKEMA) are enriched in basic and acidic residues. A compositionally biased stretch (gly residues) spans 53–64 (LLGGGIKKSGKK).

The protein belongs to the TMA7 family.

This is Translation machinery-associated protein 7 homolog from Caenorhabditis briggsae.